We begin with the raw amino-acid sequence, 145 residues long: Small ribosomal subunit protein eS19 (145 aa).

It belongs to the eukaryotic ribosomal protein eS19 family. As to quaternary structure, component of the small ribosomal subunit.

It is found in the cytoplasm. Its subcellular location is the nucleus. Its function is as follows. Component of the small ribosomal subunit. The ribosome is a large ribonucleoprotein complex responsible for the synthesis of proteins in the cell. Required for pre-rRNA processing and maturation of 40S ribosomal subunits. The sequence is that of Small ribosomal subunit protein eS19 (rps19) from Myxine glutinosa (Atlantic hagfish).